The following is a 148-amino-acid chain: UPF0260 protein YE2365 (148 aa).

This sequence belongs to the UPF0260 family.

The polypeptide is UPF0260 protein YE2365 (Yersinia enterocolitica serotype O:8 / biotype 1B (strain NCTC 13174 / 8081)).